The chain runs to 272 residues: MAKLAAFDMDGTLLMPDHRLGEQTLTALKRLRERNITLTFATGRHVLEMHHVIGEFSLDAFLITGNGTRIHSLEGEELYRQDLAPEAAEAVLHSKWDTQASMHVFNDGGWFTGQARPELLKAHAFSGFHYQLCDPKRMPAHHVTKICFCGDHDDLRRLRIQLNETLGDRAFLCFSAMDCLEVLPVGCNKGAALAVLSQHLGFTLQECMAFGDAMNDREMLGSVGRGFIMGNAMPQLKAELPHLQVIGDCRHQAVSHFLTHWLDNPDLPYSPE.

D8 functions as the Nucleophile in the catalytic mechanism. 3 residues coordinate Mg(2+): D8, D10, and D212.

This sequence belongs to the HAD-like hydrolase superfamily. Cof family. Mg(2+) serves as cofactor.

The catalysed reaction is 4-amino-2-methyl-5-(diphosphooxymethyl)pyrimidine + H2O = 4-amino-2-methyl-5-(phosphooxymethyl)pyrimidine + phosphate + H(+). Functionally, catalyzes the hydrolysis of 4-amino-2-methyl-5-hydroxymethylpyrimidine pyrophosphate (HMP-PP) to 4-amino-2-methyl-5-hydroxymethylpyrimidine phosphate (HMP-P). This is HMP-PP phosphatase from Klebsiella pneumoniae (strain 342).